A 497-amino-acid polypeptide reads, in one-letter code: Glycerol kinase (497 aa).

ADP is bound at residue Thr11. ATP-binding residues include Thr11, Thr12, and Ser13. Thr11 lines the sn-glycerol 3-phosphate pocket. Residue Arg15 participates in ADP binding. 4 residues coordinate sn-glycerol 3-phosphate: Arg81, Glu82, Tyr133, and Asp242. The glycerol site is built by Arg81, Glu82, Tyr133, Asp242, and Gln243. The ADP site is built by Thr264 and Gly306. ATP is bound by residues Thr264, Gly306, Gln310, and Gly407. Residues Gly407 and Asn411 each coordinate ADP.

Belongs to the FGGY kinase family.

It catalyses the reaction glycerol + ATP = sn-glycerol 3-phosphate + ADP + H(+). The protein operates within polyol metabolism; glycerol degradation via glycerol kinase pathway; sn-glycerol 3-phosphate from glycerol: step 1/1. Inhibited by fructose 1,6-bisphosphate (FBP). Its function is as follows. Key enzyme in the regulation of glycerol uptake and metabolism. Catalyzes the phosphorylation of glycerol to yield sn-glycerol 3-phosphate. The chain is Glycerol kinase from Alcanivorax borkumensis (strain ATCC 700651 / DSM 11573 / NCIMB 13689 / SK2).